The chain runs to 145 residues: Hemoglobin fetal subunit beta (145 aa).

Residues 1–145 (MLSAEEKASV…VANALAHRYH (145 aa)) enclose the Globin domain. Positions 62 and 91 each coordinate heme b.

This sequence belongs to the globin family. In terms of assembly, heterotetramer of two alpha chains and two beta chains. As to expression, red blood cells.

In terms of biological role, involved in oxygen transport from the lung to the various peripheral tissues. The polypeptide is Hemoglobin fetal subunit beta (Capra hircus (Goat)).